We begin with the raw amino-acid sequence, 534 residues long: (R)-citramalate synthase (534 aa).

The Pyruvate carboxyltransferase domain maps to 11–274 (FHVFDTTLRD…KQVLPEGRLR (264 aa)).

It belongs to the alpha-IPM synthase/homocitrate synthase family.

It catalyses the reaction pyruvate + acetyl-CoA + H2O = (3R)-citramalate + CoA + H(+). Its pathway is amino-acid biosynthesis; L-isoleucine biosynthesis; 2-oxobutanoate from pyruvate: step 1/3. Its function is as follows. Catalyzes the condensation of pyruvate and acetyl-coenzyme A to form (R)-citramalate. This chain is (R)-citramalate synthase, found in Streptomyces coelicolor (strain ATCC BAA-471 / A3(2) / M145).